We begin with the raw amino-acid sequence, 277 residues long: Undecaprenyl-diphosphatase (277 aa).

The next 6 helical transmembrane spans lie at 53–73 (LGAI…VILG), 85–105 (VNLL…ADLI), 108–128 (WLFN…VMLW), 183–203 (AATE…AAYS), 215–235 (GDLP…MLAV), and 250–270 (FAWY…LGVV).

The protein belongs to the UppP family.

It is found in the cell inner membrane. The enzyme catalyses di-trans,octa-cis-undecaprenyl diphosphate + H2O = di-trans,octa-cis-undecaprenyl phosphate + phosphate + H(+). In terms of biological role, catalyzes the dephosphorylation of undecaprenyl diphosphate (UPP). Confers resistance to bacitracin. The sequence is that of Undecaprenyl-diphosphatase from Azotobacter vinelandii (strain DJ / ATCC BAA-1303).